A 222-amino-acid chain; its full sequence is Glutathione S-transferase (222 aa).

The 81-residue stretch at 3 to 83 (GKPKLHYTRG…YIAGKYNLYG (81 aa)) folds into the GST N-terminal domain. Residues Tyr-9, Arg-45, 54–55 (QV), and 67–68 (QS) contribute to the glutathione site. A GST C-terminal domain is found at 85-208 (DLKERAWIDM…QPGSQRKPPL (124 aa)).

This sequence belongs to the GST superfamily. Alpha family. In terms of assembly, homodimer.

The protein localises to the cytoplasm. It catalyses the reaction RX + glutathione = an S-substituted glutathione + a halide anion + H(+). Its function is as follows. Conjugation of reduced glutathione to a wide number of exogenous and endogenous hydrophobic electrophiles. In Gallus gallus (Chicken), this protein is Glutathione S-transferase.